The chain runs to 132 residues: Small ribosomal subunit protein uS8 (132 aa).

Belongs to the universal ribosomal protein uS8 family. As to quaternary structure, part of the 30S ribosomal subunit. Contacts proteins S5 and S12.

In terms of biological role, one of the primary rRNA binding proteins, it binds directly to 16S rRNA central domain where it helps coordinate assembly of the platform of the 30S subunit. This Bartonella quintana (strain Toulouse) (Rochalimaea quintana) protein is Small ribosomal subunit protein uS8.